We begin with the raw amino-acid sequence, 398 residues long: 2-amino-3-ketobutyrate coenzyme A ligase (398 aa).

111–112 serves as a coordination point for pyridoxal 5'-phosphate; it reads CF. His-136 lines the substrate pocket. Residues Ser-185, 210-213, 241-244, and 274-275 each bind pyridoxal 5'-phosphate; these read DDSH, TLGK, and SN. N6-(pyridoxal phosphate)lysine is present on Lys-244. Arg-368 contacts substrate.

Belongs to the class-II pyridoxal-phosphate-dependent aminotransferase family. As to quaternary structure, homodimer. The cofactor is pyridoxal 5'-phosphate.

The enzyme catalyses glycine + acetyl-CoA = (2S)-2-amino-3-oxobutanoate + CoA. The protein operates within amino-acid degradation; L-threonine degradation via oxydo-reductase pathway; glycine from L-threonine: step 2/2. Functionally, catalyzes the cleavage of 2-amino-3-ketobutyrate to glycine and acetyl-CoA. This chain is 2-amino-3-ketobutyrate coenzyme A ligase, found in Salmonella typhimurium (strain LT2 / SGSC1412 / ATCC 700720).